A 201-amino-acid chain; its full sequence is Pectinesterase inhibitor 7 (201 aa).

Residues 1 to 24 form the signal peptide; the sequence is MARNFELSLILFVLYLSTAAIVMA. Disulfide bonds link cysteine 42-cysteine 51 and cysteine 108-cysteine 159.

The protein belongs to the PMEI family. Binds reversibly to PME3 to inhibit its activity; the stability of the PME3-PMEI7 complex and the inhibition of the pectin methylesterase (PME) activity is pH-dependent, based on protonation status of amino-acids at the complex interface. In terms of tissue distribution, accumulates in etiolated hypocotyls (at protein level).

It is found in the secreted. The protein resides in the extracellular space. Its subcellular location is the apoplast. It localises to the cell wall. In terms of biological role, pectin methylesterase (PME) inhibitor that can target PME3 in a pH-dependent manner, mainly in slightly acidic conditions (pH 6.0 and 5.0) but not at pH 7.0; this processus relies on changes in the protonation of amino acids involved in intermolecular and intramolecular interactions. Regulates homogalacturonan methylesterification during plant development. The sequence is that of Pectinesterase inhibitor 7 from Arabidopsis thaliana (Mouse-ear cress).